Here is a 176-residue protein sequence, read N- to C-terminus: RNA pyrophosphohydrolase (176 aa).

Residues 6 to 149 (GYRPNVGIVI…KRDVYRRVMK (144 aa)) form the Nudix hydrolase domain. The Nudix box signature appears at 38 to 59 (GGINPGESAEQAMYRELFEEVG).

It belongs to the Nudix hydrolase family. RppH subfamily. A divalent metal cation serves as cofactor.

Its function is as follows. Accelerates the degradation of transcripts by removing pyrophosphate from the 5'-end of triphosphorylated RNA, leading to a more labile monophosphorylated state that can stimulate subsequent ribonuclease cleavage. The polypeptide is RNA pyrophosphohydrolase (Klebsiella pneumoniae (strain 342)).